The sequence spans 690 residues: Cysteine-rich receptor-like protein kinase 21 (690 aa).

Residues 1 to 24 (MQKNKMVDLRAIFWFVVISSCAVA) form the signal peptide. The 105-residue stretch at 25-129 (APTCIQRSDF…CLVRYSNHLI (105 aa)) folds into the Gnk2-homologous 1 domain. The Extracellular segment spans residues 25–281 (APTCIQRSDF…KDGKNISTGS (257 aa)). Residues N130, N148, N155, N220, N268, and N276 are each glycosylated (N-linked (GlcNAc...) asparagine). The region spanning 140–246 (AEYIEYKYNT…CFMRWDLQPF (107 aa)) is the Gnk2-homologous 2 domain. Residues 282–302 (IVAIAVVSVVVSTVLLALGYA) form a helical membrane-spanning segment. At 303-690 (VSRRRKAYQS…DASITSVRPR (388 aa)) the chain is on the cytoplasmic side. The Protein kinase domain maps to 363–640 (FHKSNKLGHG…IFRMLTNVSI (278 aa)). Residues 369-377 (LGHGGFGAV) and K391 contribute to the ATP site. The residue at position 436 (Y436) is a Phosphotyrosine. D488 serves as the catalytic Proton acceptor. At S492 the chain carries Phosphoserine. Residue T528 is modified to Phosphothreonine. Y536 carries the phosphotyrosine modification.

This sequence belongs to the protein kinase superfamily. Ser/Thr protein kinase family. CRK subfamily.

The protein localises to the membrane. It carries out the reaction L-seryl-[protein] + ATP = O-phospho-L-seryl-[protein] + ADP + H(+). It catalyses the reaction L-threonyl-[protein] + ATP = O-phospho-L-threonyl-[protein] + ADP + H(+). In Arabidopsis thaliana (Mouse-ear cress), this protein is Cysteine-rich receptor-like protein kinase 21 (CRK21).